The chain runs to 428 residues: Tryptophan synthase beta chain (428 aa).

Position 100 is an N6-(pyridoxal phosphate)lysine (K100).

It belongs to the TrpB family. In terms of assembly, tetramer of two alpha and two beta chains. The cofactor is pyridoxal 5'-phosphate.

The enzyme catalyses (1S,2R)-1-C-(indol-3-yl)glycerol 3-phosphate + L-serine = D-glyceraldehyde 3-phosphate + L-tryptophan + H2O. Its pathway is amino-acid biosynthesis; L-tryptophan biosynthesis; L-tryptophan from chorismate: step 5/5. Its function is as follows. The beta subunit is responsible for the synthesis of L-tryptophan from indole and L-serine. The sequence is that of Tryptophan synthase beta chain from Streptomyces avermitilis (strain ATCC 31267 / DSM 46492 / JCM 5070 / NBRC 14893 / NCIMB 12804 / NRRL 8165 / MA-4680).